Consider the following 285-residue polypeptide: Pyrroline-5-carboxylate reductase (285 aa).

It belongs to the pyrroline-5-carboxylate reductase family. Homotetramer.

It carries out the reaction L-proline + NADP(+) = (S)-1-pyrroline-5-carboxylate + NADPH + 2 H(+). It catalyses the reaction L-proline + NAD(+) = (S)-1-pyrroline-5-carboxylate + NADH + 2 H(+). It functions in the pathway amino-acid biosynthesis; L-proline biosynthesis; L-proline from L-glutamate 5-semialdehyde: step 1/1. This Kluyveromyces lactis (strain ATCC 8585 / CBS 2359 / DSM 70799 / NBRC 1267 / NRRL Y-1140 / WM37) (Yeast) protein is Pyrroline-5-carboxylate reductase.